A 711-amino-acid chain; its full sequence is Constitutive ornithine decarboxylase (711 aa).

Lys-347 is modified (N6-(pyridoxal phosphate)lysine).

Belongs to the Orn/Lys/Arg decarboxylase class-I family. It depends on pyridoxal 5'-phosphate as a cofactor.

It catalyses the reaction L-ornithine + H(+) = putrescine + CO2. It participates in amine and polyamine biosynthesis; putrescine biosynthesis via L-ornithine pathway; putrescine from L-ornithine: step 1/1. The sequence is that of Constitutive ornithine decarboxylase (speC) from Escherichia coli (strain K12).